Reading from the N-terminus, the 390-residue chain is Large ribosomal subunit protein mL44 (390 aa).

Residues 1-59 (MGIVLKRAIAAGMKPFPNSTWHWSRTIRPFSQHLSSTCFLQQSSRFTSKRYLHLSTLTQ) constitute a mitochondrion transit peptide. Residues 139–205 (AFVNTVPTNK…LAHIAKYWGI (67 aa)) form the RNase III domain. The 71-residue stretch at 302-372 (QPTRELAMLC…ATDALMKWYC (71 aa)) folds into the DRBM domain.

Belongs to the ribonuclease III family. Mitochondrion-specific ribosomal protein mL44 subfamily. As to quaternary structure, component of the mitochondrial large ribosomal subunit (mt-LSU). Mature yeast 74S mitochondrial ribosomes consist of a small (37S) and a large (54S) subunit. The 37S small subunit contains a 15S ribosomal RNA (15S mt-rRNA) and 34 different proteins. The 54S large subunit contains a 21S rRNA (21S mt-rRNA) and 46 different proteins. mL44 forms a heterodimer with mL57 and stabilizes rRNA expansion segments 1/2 at a membrane-facing protuberance close to the point of attachment of the ribosome to the translocon in the membrane.

The protein resides in the mitochondrion. Its function is as follows. Component of the mitochondrial ribosome (mitoribosome), a dedicated translation machinery responsible for the synthesis of mitochondrial genome-encoded proteins, including at least some of the essential transmembrane subunits of the mitochondrial respiratory chain. The mitoribosomes are attached to the mitochondrial inner membrane and translation products are cotranslationally integrated into the membrane. The chain is Large ribosomal subunit protein mL44 (MRPL3) from Saccharomyces cerevisiae (strain ATCC 204508 / S288c) (Baker's yeast).